The following is a 275-amino-acid chain: Seminase (275 aa).

Residues 1–19 form the signal peptide; sequence MKRLLFLFLLAGILINNHA. A glycan (N-linked (GlcNAc...) asparagine) is linked at Asn23. The 225-residue stretch at 44–268 folds into the Peptidase S1 domain; the sequence is VIGGRVTTNA…VKPFIVKGIK (225 aa). A disulfide bridge connects residues Cys70 and Cys86. Residues His85 and Asp131 each act as charge relay system in the active site. Intrachain disulfides connect Cys194-Cys210 and Cys220-Cys244. The active-site Charge relay system is the Ser224.

Belongs to the peptidase S1 family. Undergoes cleavage in the male during mating with a cleaved product detected in the ejaculatory duct and/or bulb of males by 8-10 minutes after the start of mating. Further cleavage occurs in the mated female. As to expression, produced in the male accessory glands and secreted into seminal fluid.

The protein resides in the secreted. In terms of biological role, seminal fluid protease which is required for cleavage and probably also activation of the metalloprotease Semp1. Also required for a number of female post-mating responses independent of Semp1 including egg laying and sperm usage. The protein is Seminase of Drosophila melanogaster (Fruit fly).